Here is a 773-residue protein sequence, read N- to C-terminus: Circadian clock protein PASD1 (773 aa).

The PAS domain occupies 30–102 (YDYFNQVTLQ…IILKFPLLNS (73 aa)). The segment at 313–361 (SVDQEGPMDQQDPENPVAPLDQAGLMDPVDPEDSVDLGAAGASAQPLQP) is disordered. Residues 365–412 (VAYDIISQELELMKKLKEQLEERTWLLHDAIQNQQNALELMMDHLQKQ) form a necessary for transcriptional repression region. A coiled-coil region spans residues 365 to 412 (VAYDIISQELELMKKLKEQLEERTWLLHDAIQNQQNALELMMDHLQKQ). 3 disordered regions span residues 427–448 (SEAV…PLPH), 506–569 (QRKV…QLQE), and 732–773 (GVEG…NKPC). The stretch at 475–553 (VAFNQQQLVQ…QERKKWQGQM (79 aa)) forms a coiled coil. The span at 506-536 (QRKVQKQKKMQEKKKLQEQKMQEKKKLQEQR) shows a compositional bias: basic and acidic residues.

As to quaternary structure, interacts with the CLOCK-BMAL1 heterodimer; this interaction inhibits CLOCK-BMAL1 transcriptional activation and suppress circadian timekeeping. Interacts with BMAL1. Testis-specific. Expressed in a broad range of cancer cells, including melanoma, lung cancer, and breast cancer (at protein level). Testis-specific. Found in histologically normal tissues from patients with uterus, lung and small intestine cancers. Widespread expression seen in solid tumors and diffuse large B-cell lymphoma (DLBCL)-derived cell lines. Isoform 2 is expressed in all DLBCL-derived cell lines, while isoform 1 is preferentially expressed in cell lines derived from non-germinal center DLBCL.

It is found in the nucleus. Functions as a suppressor of the biological clock that drives the daily circadian rhythms of cells throughout the body. Acts as a nuclear repressor of the CLOCK-BMAL1 heterodimer-mediated transcriptional activation of the core clock components. Inhibits circadian clock function in cancer cells, when overexpressed. The sequence is that of Circadian clock protein PASD1 from Homo sapiens (Human).